The chain runs to 450 residues: Salicylate synthase (450 aa).

The active-site Proton donor is Glu252. A substrate-binding site is contributed by 270-271 (GT). Residue Glu297 coordinates Mg(2+). Residues Tyr385, Arg405, and 419–421 (GAG) contribute to the substrate site. Positions 431 and 434 each coordinate Mg(2+). Lys438 is a substrate binding site.

This sequence belongs to the anthranilate synthase component I family. Salicylate synthase subfamily. As to quaternary structure, monomer. Requires Mg(2+) as cofactor.

The catalysed reaction is chorismate = isochorismate. The enzyme catalyses isochorismate = salicylate + pyruvate. It catalyses the reaction chorismate = prephenate. Its pathway is siderophore biosynthesis; mycobactin biosynthesis. In terms of biological role, involved in the incorporation of salicylate into the virulence-conferring salicylate-based siderophore mycobactin. Catalyzes the initial conversion of chorismate to yield the intermediate isochorismate (isochorismate synthase activity), and the subsequent elimination of the enolpyruvyl side chain in a lyase reaction to give salicylate (isochorismate pyruvate-lyase activity). In the absence of magnesium, MbtI displays a chorismate mutase activity and converts chorismate to prephenate. The sequence is that of Salicylate synthase (mbtI) from Mycobacterium bovis (strain ATCC BAA-935 / AF2122/97).